A 168-amino-acid polypeptide reads, in one-letter code: Auxin-responsive protein IAA1 (168 aa).

The interval 1–74 (MEVTNGLNLK…NRKNNNNKNV (74 aa)) is disordered. The short motif at 14 to 18 (LRLGL) is the EAR-like (transcriptional repression) element. Over residues 23-34 (EEQQLELSCVRS) the composition is skewed to polar residues. The PB1 domain maps to 74–161 (VSYVKVSMDG…SCQKLRIMKG (88 aa)).

This sequence belongs to the Aux/IAA family. Homodimers and heterodimers. Interacts with the auxin-responsive protein IAA2. Interacts with TPL. Post-translationally, phosphorylated by phytochrome A in vitro. Preferentially expressed in stems, leaves and flowers.

The protein resides in the nucleus. In terms of biological role, aux/IAA proteins are short-lived transcriptional factors that function as repressors of early auxin response genes at low auxin concentrations. Repression is thought to result from the interaction with auxin response factors (ARFs), proteins that bind to the auxin-responsive promoter element (AuxRE). Formation of heterodimers with ARF proteins may alter their ability to modulate early auxin response genes expression. The polypeptide is Auxin-responsive protein IAA1 (IAA1) (Arabidopsis thaliana (Mouse-ear cress)).